A 293-amino-acid polypeptide reads, in one-letter code: Glutamyl-Q tRNA(Asp) synthetase (293 aa).

L-glutamate-binding positions include 26–30 (RYAPS) and aspartate 62. The 'HIGH' region signature appears at 29–39 (PSPTGALHLGN). Zn(2+) is bound by residues cysteine 118, cysteine 120, tyrosine 131, and cysteine 135. 2 residues coordinate L-glutamate: tyrosine 178 and arginine 196. The 'KMSKS' region motif lies at 234–238 (KLSKR). Lysine 237 provides a ligand contact to ATP.

It belongs to the class-I aminoacyl-tRNA synthetase family. GluQ subfamily. The cofactor is Zn(2+).

Functionally, catalyzes the tRNA-independent activation of glutamate in presence of ATP and the subsequent transfer of glutamate onto a tRNA(Asp). Glutamate is transferred on the 2-amino-5-(4,5-dihydroxy-2-cyclopenten-1-yl) moiety of the queuosine in the wobble position of the QUC anticodon. This chain is Glutamyl-Q tRNA(Asp) synthetase, found in Parasynechococcus marenigrum (strain WH8102).